A 217-amino-acid chain; its full sequence is Uracil-DNA glycosylase (217 aa).

Catalysis depends on Asp-62, which acts as the Proton acceptor.

This sequence belongs to the uracil-DNA glycosylase (UDG) superfamily. UNG family.

The protein resides in the cytoplasm. The catalysed reaction is Hydrolyzes single-stranded DNA or mismatched double-stranded DNA and polynucleotides, releasing free uracil.. Its function is as follows. Excises uracil residues from the DNA which can arise as a result of misincorporation of dUMP residues by DNA polymerase or due to deamination of cytosine. The sequence is that of Uracil-DNA glycosylase from Streptococcus mutans serotype c (strain ATCC 700610 / UA159).